The following is a 176-amino-acid chain: Peptide methionine sulfoxide reductase MsrA (176 aa).

Cys10 is an active-site residue.

This sequence belongs to the MsrA Met sulfoxide reductase family.

The enzyme catalyses L-methionyl-[protein] + [thioredoxin]-disulfide + H2O = L-methionyl-(S)-S-oxide-[protein] + [thioredoxin]-dithiol. It carries out the reaction [thioredoxin]-disulfide + L-methionine + H2O = L-methionine (S)-S-oxide + [thioredoxin]-dithiol. In terms of biological role, has an important function as a repair enzyme for proteins that have been inactivated by oxidation. Catalyzes the reversible oxidation-reduction of methionine sulfoxide in proteins to methionine. The polypeptide is Peptide methionine sulfoxide reductase MsrA (Sulfolobus acidocaldarius (strain ATCC 33909 / DSM 639 / JCM 8929 / NBRC 15157 / NCIMB 11770)).